The primary structure comprises 502 residues: NAD(P)H-quinone oxidoreductase subunit 2, chloroplastic (502 aa).

14 helical membrane passes run 15–35, 42–62, 79–99, 108–128, 132–152, 167–187, 210–230, 253–275, 278–298, 307–327, 334–354, 375–395, 413–433, and 468–488; these read VLPE…DLIF, VLPY…LFQW, LSIA…LLSI, TLSE…LLCG, ILMI…LTGY, LLIG…LYGL, LASL…IAAA, VSSK…PYII, WHNI…IIAI, LGYS…AGNI, LVYM…VILF, ILAL…PFGG, LLVF…IKII, and ILIC…IISI.

The protein belongs to the complex I subunit 2 family. As to quaternary structure, NDH is composed of at least 16 different subunits, 5 of which are encoded in the nucleus.

It is found in the plastid. The protein resides in the chloroplast thylakoid membrane. The catalysed reaction is a plastoquinone + NADH + (n+1) H(+)(in) = a plastoquinol + NAD(+) + n H(+)(out). It carries out the reaction a plastoquinone + NADPH + (n+1) H(+)(in) = a plastoquinol + NADP(+) + n H(+)(out). Its function is as follows. NDH shuttles electrons from NAD(P)H:plastoquinone, via FMN and iron-sulfur (Fe-S) centers, to quinones in the photosynthetic chain and possibly in a chloroplast respiratory chain. The immediate electron acceptor for the enzyme in this species is believed to be plastoquinone. Couples the redox reaction to proton translocation, and thus conserves the redox energy in a proton gradient. The chain is NAD(P)H-quinone oxidoreductase subunit 2, chloroplastic from Mesostigma viride (Green alga).